The chain runs to 218 residues: CTP-dependent diacylglycerol kinase 1 (218 aa).

At 1 to 19 the chain is on the lumenal side; it reads MSTKLTWSQWSKKHEIPRK. A helical transmembrane segment spans residues 20-37; it reads ALHTSIGFFALLLQGCGY. His-38 is a topological domain (cytoplasmic). A helical membrane pass occupies residues 39–59; it reads AAQIIPVIEIGFIPAFTGDVI. At 60 to 88 the chain is on the lumenal side; it reads RFNWPAFSRLYNRVIGPLMRESEKNAWNG. A helical membrane pass occupies residues 89–109; that stretch reads VIFYMIGVWIVLKVFPEEIAV. Residues 110–142 lie on the Cytoplasmic side of the membrane; that stretch reads MSVLLLSWCDTTASTVGRKWGKYTPKIAKNKSL. Residues 143-163 form a helical membrane-spanning segment; that stretch reads AGSLGAFVCGVFCCYVYWGLF. At 164-179 the chain is on the lumenal side; sequence RTGPDSLAAQSRIPFP. 2 helical membrane-spanning segments follow: residues 180-200 and 201-217; these read WLCL…VWGL and DDNL…LYLI. Residue Met-218 is a topological domain, lumenal.

This sequence belongs to the DGK1 family. Ca(2+) is required as a cofactor. Requires Mg(2+) as cofactor.

Its subcellular location is the endoplasmic reticulum membrane. It localises to the nucleus membrane. It catalyses the reaction a 1,2-diacyl-sn-glycerol + CTP = a 1,2-diacyl-sn-glycero-3-phosphate + CDP + H(+). Functionally, CTP-dependent diacylglycerol kinase that catalyzes the phosphorylation of diacylglycerol (DAG) to phosphatidate (PA). Controls phosphatidate levels at the nuclear envelope. Counteracts the activity of PA phosphatase ned1. May be involved in vesicle trafficking between the endoplasmic reticulum and the Golgi apparatus. Involved in pre-tRNA splicing. The sequence is that of CTP-dependent diacylglycerol kinase 1 (ptp4) from Schizosaccharomyces pombe (strain 972 / ATCC 24843) (Fission yeast).